We begin with the raw amino-acid sequence, 453 residues long: Ribose 1,5-bisphosphate phosphokinase PhnN (453 aa).

The interval 1–21 (MHGSTGFVQGTRPAGDQADPL) is disordered. The tract at residues 1–271 (MHGSTGFVQG…SGQGERASLP (271 aa)) is unknown. Residues 272–453 (HSGRIFFCVG…KLLDILRQAK (182 aa)) form a ribose 1,5-bisphosphokinase region.

The protein in the C-terminal section; belongs to the ribose 1,5-bisphosphokinase family.

It carries out the reaction alpha-D-ribose 1,5-bisphosphate + ATP = 5-phospho-alpha-D-ribose 1-diphosphate + ADP. Its pathway is metabolic intermediate biosynthesis; 5-phospho-alpha-D-ribose 1-diphosphate biosynthesis; 5-phospho-alpha-D-ribose 1-diphosphate from D-ribose 5-phosphate (route II): step 3/3. Catalyzes the phosphorylation of ribose 1,5-bisphosphate to 5-phospho-D-ribosyl alpha-1-diphosphate (PRPP). This chain is Ribose 1,5-bisphosphate phosphokinase PhnN (phnN), found in Janthinobacterium sp. (strain Marseille) (Minibacterium massiliensis).